A 338-amino-acid chain; its full sequence is Ketol-acid reductoisomerase (NADP(+)) (338 aa).

The KARI N-terminal Rossmann domain occupies 1 to 181; it reads MKVFYDKDAD…GGGRAGIIET (181 aa). NADP(+) contacts are provided by residues 24–27, arginine 47, and serine 52; that span reads YGSQ. Histidine 107 is an active-site residue. Residue glycine 133 coordinates NADP(+). Residues 182 to 327 form the KARI C-terminal knotted domain; the sequence is NFREETETDL…AKLRAMMPWI (146 aa). Residues aspartate 190, glutamate 194, glutamate 226, and glutamate 230 each contribute to the Mg(2+) site. Position 251 (serine 251) interacts with substrate.

The protein belongs to the ketol-acid reductoisomerase family. The cofactor is Mg(2+).

The catalysed reaction is (2R)-2,3-dihydroxy-3-methylbutanoate + NADP(+) = (2S)-2-acetolactate + NADPH + H(+). It carries out the reaction (2R,3R)-2,3-dihydroxy-3-methylpentanoate + NADP(+) = (S)-2-ethyl-2-hydroxy-3-oxobutanoate + NADPH + H(+). It participates in amino-acid biosynthesis; L-isoleucine biosynthesis; L-isoleucine from 2-oxobutanoate: step 2/4. Its pathway is amino-acid biosynthesis; L-valine biosynthesis; L-valine from pyruvate: step 2/4. Its function is as follows. Involved in the biosynthesis of branched-chain amino acids (BCAA). Catalyzes an alkyl-migration followed by a ketol-acid reduction of (S)-2-acetolactate (S2AL) to yield (R)-2,3-dihydroxy-isovalerate. In the isomerase reaction, S2AL is rearranged via a Mg-dependent methyl migration to produce 3-hydroxy-3-methyl-2-ketobutyrate (HMKB). In the reductase reaction, this 2-ketoacid undergoes a metal-dependent reduction by NADPH to yield (R)-2,3-dihydroxy-isovalerate. The polypeptide is Ketol-acid reductoisomerase (NADP(+)) (Ralstonia nicotianae (strain ATCC BAA-1114 / GMI1000) (Ralstonia solanacearum)).